The sequence spans 262 residues: tRNA U34 carboxymethyltransferase (262 aa).

Residues K25, W39, K44, G63, 114–115 (VE), Y135, and R250 contribute to the carboxy-S-adenosyl-L-methionine site.

It belongs to the class I-like SAM-binding methyltransferase superfamily. CmoB family. Homotetramer.

The enzyme catalyses carboxy-S-adenosyl-L-methionine + 5-hydroxyuridine(34) in tRNA = 5-carboxymethoxyuridine(34) in tRNA + S-adenosyl-L-homocysteine + H(+). Catalyzes carboxymethyl transfer from carboxy-S-adenosyl-L-methionine (Cx-SAM) to 5-hydroxyuridine (ho5U) to form 5-carboxymethoxyuridine (cmo5U) at position 34 in tRNAs. The chain is tRNA U34 carboxymethyltransferase from Helicobacter acinonychis (strain Sheeba).